A 281-amino-acid chain; its full sequence is E3 ubiquitin-protein ligase MARCHF5 (281 aa).

The RING-CH-type zinc finger occupies 9–78; that stretch reads LPQTMDRSCW…PQCNAEYLIV (70 aa). Zn(2+)-binding residues include Cys-17, Cys-20, Cys-36, Cys-38, His-46, Cys-49, Cys-68, and Cys-71. 4 consecutive transmembrane segments (helical) span residues 102 to 122, 142 to 162, 212 to 232, and 241 to 261; these read FAAA…YGAV, PLFL…GKMI, ILCG…LMFS, and TILG…YFKQ.

Its subcellular location is the mitochondrion outer membrane. It localises to the endoplasmic reticulum membrane. The catalysed reaction is S-ubiquitinyl-[E2 ubiquitin-conjugating enzyme]-L-cysteine + [acceptor protein]-L-lysine = [E2 ubiquitin-conjugating enzyme]-L-cysteine + N(6)-ubiquitinyl-[acceptor protein]-L-lysine.. It functions in the pathway protein modification; protein ubiquitination. Functionally, mitochondrial E3 ubiquitin-protein ligase that plays a crucial role in the control of mitochondrial morphology by acting as a positive regulator of mitochondrial fission. May play a role in the prevention of cell senescence acting as a regulator of mitochondrial quality control. The protein is E3 ubiquitin-protein ligase MARCHF5 (MARCHF5) of Gallus gallus (Chicken).